Reading from the N-terminus, the 106-residue chain is UPF0473 protein LSEI_0788 (106 aa).

The protein belongs to the UPF0473 family.

The protein is UPF0473 protein LSEI_0788 of Lacticaseibacillus paracasei (strain ATCC 334 / BCRC 17002 / CCUG 31169 / CIP 107868 / KCTC 3260 / NRRL B-441) (Lactobacillus paracasei).